The chain runs to 498 residues: Galactose-1-phosphate uridylyltransferase (498 aa).

Belongs to the galactose-1-phosphate uridylyltransferase type 2 family.

The protein resides in the cytoplasm. The enzyme catalyses alpha-D-galactose 1-phosphate + UDP-alpha-D-glucose = alpha-D-glucose 1-phosphate + UDP-alpha-D-galactose. It participates in carbohydrate metabolism; galactose metabolism. This is Galactose-1-phosphate uridylyltransferase from Staphylococcus carnosus (strain TM300).